Consider the following 405-residue polypeptide: Argininosuccinate synthase (405 aa).

Residues alanine 10–serine 18 and alanine 37 contribute to the ATP site. L-citrulline-binding residues include tyrosine 90 and serine 95. Position 120 (glycine 120) interacts with ATP. L-aspartate contacts are provided by threonine 122, asparagine 126, and aspartate 127. Asparagine 126 lines the L-citrulline pocket. L-citrulline contacts are provided by arginine 130, serine 181, serine 190, glutamate 266, and tyrosine 278.

The protein belongs to the argininosuccinate synthase family. Type 1 subfamily. In terms of assembly, homotetramer.

The protein localises to the cytoplasm. The enzyme catalyses L-citrulline + L-aspartate + ATP = 2-(N(omega)-L-arginino)succinate + AMP + diphosphate + H(+). It functions in the pathway amino-acid biosynthesis; L-arginine biosynthesis; L-arginine from L-ornithine and carbamoyl phosphate: step 2/3. This chain is Argininosuccinate synthase, found in Rhizorhabdus wittichii (strain DSM 6014 / CCUG 31198 / JCM 15750 / NBRC 105917 / EY 4224 / RW1) (Sphingomonas wittichii).